A 155-amino-acid polypeptide reads, in one-letter code: Large ribosomal subunit protein uL22 (155 aa).

This sequence belongs to the universal ribosomal protein uL22 family. As to quaternary structure, part of the 50S ribosomal subunit.

Functionally, this protein binds specifically to 23S rRNA. It makes multiple contacts with different domains of the 23S rRNA in the assembled 50S subunit and ribosome. In terms of biological role, the globular domain of the protein is located near the polypeptide exit tunnel on the outside of the subunit, while an extended beta-hairpin is found that lines the wall of the exit tunnel in the center of the 70S ribosome. This chain is Large ribosomal subunit protein uL22, found in Pyrococcus horikoshii (strain ATCC 700860 / DSM 12428 / JCM 9974 / NBRC 100139 / OT-3).